Consider the following 342-residue polypeptide: UDP-3-O-acylglucosamine N-acyltransferase (342 aa).

Catalysis depends on H242, which acts as the Proton acceptor.

It belongs to the transferase hexapeptide repeat family. LpxD subfamily. Homotrimer.

The enzyme catalyses a UDP-3-O-[(3R)-3-hydroxyacyl]-alpha-D-glucosamine + a (3R)-hydroxyacyl-[ACP] = a UDP-2-N,3-O-bis[(3R)-3-hydroxyacyl]-alpha-D-glucosamine + holo-[ACP] + H(+). Its pathway is bacterial outer membrane biogenesis; LPS lipid A biosynthesis. Its function is as follows. Catalyzes the N-acylation of UDP-3-O-acylglucosamine using 3-hydroxyacyl-ACP as the acyl donor. Is involved in the biosynthesis of lipid A, a phosphorylated glycolipid that anchors the lipopolysaccharide to the outer membrane of the cell. The chain is UDP-3-O-acylglucosamine N-acyltransferase from Leptothrix cholodnii (strain ATCC 51168 / LMG 8142 / SP-6) (Leptothrix discophora (strain SP-6)).